Reading from the N-terminus, the 547-residue chain is Myrosinase 2 (547 aa).

An N-terminal signal peptide occupies residues 1 to 28 (MQHNTYIYILTMKLLGFALAILLVVATC). 3 disulfides stabilise this stretch: C36–C460, C44–C456, and C236–C244. A beta-D-glucoside contacts are provided by residues Q69, H171, and 216–217 (NQ). N340 carries N-linked (GlcNAc...) asparagine glycosylation. Y359 contacts a beta-D-glucoside. A glycan (N-linked (GlcNAc...) asparagine) is linked at N384. A beta-D-glucoside contacts are provided by residues E430, W479, 486-487 (EF), and F495. The active-site Nucleophile is the E430. An N-linked (GlcNAc...) asparagine glycan is attached at N504.

Belongs to the glycosyl hydrolase 1 family. Interacts with MVP1. In terms of tissue distribution, expressed in phloem-associated cells.

It catalyses the reaction a thioglucoside + H2O = a sugar + a thiol.. May degrade glucosinolates (glucose residue linked by a thioglucoside bound to an amino acid derivative) to glucose, sulfate and any of the products: thiocyanates, isothiocyanates, nitriles, epithionitriles or oxazolidine-2-thiones. These toxic degradation products can deter insect herbivores. Seems to function in abscisic acid (ABA) and methyl jasmonate (MeJA) signaling in guard cells. Functionally redundant with TGG1. The protein is Myrosinase 2 of Arabidopsis thaliana (Mouse-ear cress).